The primary structure comprises 295 residues: Ribosomal RNA small subunit methyltransferase A (295 aa).

S-adenosyl-L-methionine-binding residues include Asn-29, Leu-31, Gly-56, Glu-77, Asp-102, and Asn-128.

It belongs to the class I-like SAM-binding methyltransferase superfamily. rRNA adenine N(6)-methyltransferase family. RsmA subfamily.

The protein resides in the cytoplasm. The enzyme catalyses adenosine(1518)/adenosine(1519) in 16S rRNA + 4 S-adenosyl-L-methionine = N(6)-dimethyladenosine(1518)/N(6)-dimethyladenosine(1519) in 16S rRNA + 4 S-adenosyl-L-homocysteine + 4 H(+). Its function is as follows. Specifically dimethylates two adjacent adenosines (A1518 and A1519) in the loop of a conserved hairpin near the 3'-end of 16S rRNA in the 30S particle. May play a critical role in biogenesis of 30S subunits. In Listeria monocytogenes serovar 1/2a (strain ATCC BAA-679 / EGD-e), this protein is Ribosomal RNA small subunit methyltransferase A.